The primary structure comprises 82 residues: Splicing factor U2AF 35 kDa subunit (82 aa).

An N-acetylalanine modification is found at A2. A C3H1-type zinc finger spans residues 12 to 40 (EKDKVNCSFYFKIGACRHGDRCSRLHNKP). K39 bears the N6-methyllysine mark. Residues 65–82 (SHCHVSDVEVQEHYDNFF) enclose the RRM domain.

Belongs to the splicing factor SR family. Identified in the spliceosome C complex. Heterodimer with U2AF2. Interacts (via RS domain) with PHF5A (via N-terminus). Interacts with ZRANB2. Interacts with SDE2. Interacts with SF3B1.

Its subcellular location is the nucleus. It is found in the nucleus speckle. In terms of biological role, plays a critical role in both constitutive and enhancer-dependent splicing by mediating protein-protein interactions and protein-RNA interactions required for accurate 3'-splice site selection. Recruits U2 snRNP to the branch point. Directly mediates interactions between U2AF2 and proteins bound to the enhancers and thus may function as a bridge between U2AF2 and the enhancer complex to recruit it to the adjacent intron. The protein is Splicing factor U2AF 35 kDa subunit (U2AF1) of Sus scrofa (Pig).